A 384-amino-acid polypeptide reads, in one-letter code: Histidinol-phosphate aminotransferase 2 (384 aa).

Lysine 236 is subject to N6-(pyridoxal phosphate)lysine.

This sequence belongs to the class-II pyridoxal-phosphate-dependent aminotransferase family. Histidinol-phosphate aminotransferase subfamily. As to quaternary structure, homodimer. The cofactor is pyridoxal 5'-phosphate.

The catalysed reaction is L-histidinol phosphate + 2-oxoglutarate = 3-(imidazol-4-yl)-2-oxopropyl phosphate + L-glutamate. Its pathway is amino-acid biosynthesis; L-histidine biosynthesis; L-histidine from 5-phospho-alpha-D-ribose 1-diphosphate: step 7/9. This is Histidinol-phosphate aminotransferase 2 (hisC2) from Nostoc sp. (strain PCC 7120 / SAG 25.82 / UTEX 2576).